The chain runs to 432 residues: GTPase Obg (432 aa).

The region spanning 1-158 (MFVDQIKIEV…RKLKLELKVL (158 aa)) is the Obg domain. The OBG-type G domain occupies 159 to 335 (ADVGLVGFPS…LTHRTADVLE (177 aa)). GTP contacts are provided by residues 165–172 (GFPSVGKS), 190–194 (FTTLV), 212–215 (DLPG), 282–285 (SKMD), and 316–318 (SSL). Mg(2+) is bound by residues Ser172 and Thr192. Residues 354-432 (TFKEDEPAFK…IEDFTFEFVE (79 aa)) form the OCT domain.

This sequence belongs to the TRAFAC class OBG-HflX-like GTPase superfamily. OBG GTPase family. Monomer. The cofactor is Mg(2+).

The protein resides in the cytoplasm. Functionally, an essential GTPase which binds GTP, GDP and possibly (p)ppGpp with moderate affinity, with high nucleotide exchange rates and a fairly low GTP hydrolysis rate. Plays a role in control of the cell cycle, stress response, ribosome biogenesis and in those bacteria that undergo differentiation, in morphogenesis control. The chain is GTPase Obg from Ligilactobacillus salivarius (strain UCC118) (Lactobacillus salivarius).